Reading from the N-terminus, the 484-residue chain is UDP-N-acetylmuramoyl-L-alanyl-D-glutamate--L-lysine ligase (484 aa).

Residue Ser43 participates in UDP-N-acetyl-alpha-D-muramoyl-L-alanyl-D-glutamate binding. Residue 119 to 125 (GTKGKTT) coordinates ATP. UDP-N-acetyl-alpha-D-muramoyl-L-alanyl-D-glutamate-binding positions include 161 to 162 (TT), Ser188, and Arg196. Lys230 bears the N6-carboxylysine mark. Positions 405–408 (DDPN) match the L-lysine recognition motif motif.

Belongs to the MurCDEF family. MurE subfamily. Post-translationally, carboxylation is probably crucial for Mg(2+) binding and, consequently, for the gamma-phosphate positioning of ATP.

The protein localises to the cytoplasm. It carries out the reaction UDP-N-acetyl-alpha-D-muramoyl-L-alanyl-D-glutamate + L-lysine + ATP = UDP-N-acetyl-alpha-D-muramoyl-L-alanyl-gamma-D-glutamyl-L-lysine + ADP + phosphate + H(+). It participates in cell wall biogenesis; peptidoglycan biosynthesis. In terms of biological role, catalyzes the addition of L-lysine to the nucleotide precursor UDP-N-acetylmuramoyl-L-alanyl-D-glutamate (UMAG) in the biosynthesis of bacterial cell-wall peptidoglycan. This Streptococcus agalactiae serotype Ia (strain ATCC 27591 / A909 / CDC SS700) protein is UDP-N-acetylmuramoyl-L-alanyl-D-glutamate--L-lysine ligase.